The following is a 510-amino-acid chain: NAD(P)H-quinone oxidoreductase subunit 2 B, chloroplastic (510 aa).

13 helical membrane passes run 24-44 (LLLF…GLIL), 57-77 (IPWL…ALLF), 99-119 (IFQF…VEYI), 124-144 (MAIT…MFLC), 149-169 (LITI…LSGY), 183-203 (YLLM…WLYG), 227-247 (PGIS…LSPA), 295-315 (WHLL…LIAI), 323-343 (MLAY…IVGD), 354-374 (YMLF…SFGL), 392-412 (AFLA…PPLA), 418-438 (LHLF…IGLL), and 482-502 (LSMI…NPII).

It belongs to the complex I subunit 2 family. In terms of assembly, NDH is composed of at least 16 different subunits, 5 of which are encoded in the nucleus.

It is found in the plastid. The protein resides in the chloroplast thylakoid membrane. The enzyme catalyses a plastoquinone + NADH + (n+1) H(+)(in) = a plastoquinol + NAD(+) + n H(+)(out). It carries out the reaction a plastoquinone + NADPH + (n+1) H(+)(in) = a plastoquinol + NADP(+) + n H(+)(out). In terms of biological role, NDH shuttles electrons from NAD(P)H:plastoquinone, via FMN and iron-sulfur (Fe-S) centers, to quinones in the photosynthetic chain and possibly in a chloroplast respiratory chain. The immediate electron acceptor for the enzyme in this species is believed to be plastoquinone. Couples the redox reaction to proton translocation, and thus conserves the redox energy in a proton gradient. In Morus indica (Mulberry), this protein is NAD(P)H-quinone oxidoreductase subunit 2 B, chloroplastic.